Reading from the N-terminus, the 404-residue chain is L-cysteine:1D-myo-inositol 2-amino-2-deoxy-alpha-D-glucopyranoside ligase 1 (404 aa).

Cys-47 lines the Zn(2+) pocket. Residues 47-50 (CGIT), Thr-62, and 85-87 (NIT) contribute to the L-cysteinyl-5'-AMP site. The 'HIGH' region signature appears at 49–59 (ITPYDSTHLGH). Residues 188–193 (ERGGDP) carry the 'ERGGDP' region motif. Trp-228 contributes to the L-cysteinyl-5'-AMP binding site. Position 232 (Cys-232) interacts with Zn(2+). L-cysteinyl-5'-AMP is bound at residue 250-252 (GSD). Residue His-257 coordinates Zn(2+). Ile-284 is an L-cysteinyl-5'-AMP binding site. The short motif at 290 to 294 (KMSKS) is the 'KMSKS' region element.

Belongs to the class-I aminoacyl-tRNA synthetase family. MshC subfamily. As to quaternary structure, monomer. It depends on Zn(2+) as a cofactor.

The enzyme catalyses 1D-myo-inositol 2-amino-2-deoxy-alpha-D-glucopyranoside + L-cysteine + ATP = 1D-myo-inositol 2-(L-cysteinylamino)-2-deoxy-alpha-D-glucopyranoside + AMP + diphosphate + H(+). In terms of biological role, catalyzes the ATP-dependent condensation of GlcN-Ins and L-cysteine to form L-Cys-GlcN-Ins. In Corynebacterium urealyticum (strain ATCC 43042 / DSM 7109), this protein is L-cysteine:1D-myo-inositol 2-amino-2-deoxy-alpha-D-glucopyranoside ligase 1.